The sequence spans 137 residues: Small heat shock protein IbpA (137 aa).

A sHSP domain is found at 28 to 137; it reads SQSNGGYPPY…ANKPRRIEIN (110 aa).

The protein belongs to the small heat shock protein (HSP20) family. As to quaternary structure, monomer. Forms homomultimers of about 100-150 subunits at optimal growth temperatures. Conformation changes to monomers at high temperatures or high ionic concentrations.

It localises to the cytoplasm. Functionally, associates with aggregated proteins, together with IbpB, to stabilize and protect them from irreversible denaturation and extensive proteolysis during heat shock and oxidative stress. Aggregated proteins bound to the IbpAB complex are more efficiently refolded and reactivated by the ATP-dependent chaperone systems ClpB and DnaK/DnaJ/GrpE. Its activity is ATP-independent. This is Small heat shock protein IbpA from Citrobacter koseri (strain ATCC BAA-895 / CDC 4225-83 / SGSC4696).